The chain runs to 424 residues: Deoxyguanosinetriphosphate triphosphohydrolase-like protein (424 aa).

The interval 1 to 27 (MYPYSDADAFRRQPERAKSSQLRTSAV) is disordered. Residues 8–18 (DAFRRQPERAK) are compositionally biased toward basic and acidic residues. Residues 67-217 (RLTHSLEVAQ…MDFSDDIAYS (151 aa)) enclose the HD domain.

The protein belongs to the dGTPase family. Type 2 subfamily.

This chain is Deoxyguanosinetriphosphate triphosphohydrolase-like protein (dgt), found in Corynebacterium glutamicum (strain ATCC 13032 / DSM 20300 / JCM 1318 / BCRC 11384 / CCUG 27702 / LMG 3730 / NBRC 12168 / NCIMB 10025 / NRRL B-2784 / 534).